Reading from the N-terminus, the 60-residue chain is Potassium channel toxin ImKTx88 (60 aa).

The N-terminal stretch at 1–22 is a signal peptide; the sequence is MSNFSVFLIALLFCSVFILSEA. 3 disulfide bridges follow: Cys30/Cys51, Cys36/Cys56, and Cys40/Cys58.

This sequence belongs to the short scorpion toxin superfamily. Potassium channel inhibitor family. Expressed by the venom gland.

The protein resides in the secreted. Recombinant toxin selectively inhibits Kv1.3/KCNA3 potassium channels with an IC(50) of 91 pM. The chain is Potassium channel toxin ImKTx88 from Isometrus maculatus (Lesser brown scorpion).